A 438-amino-acid polypeptide reads, in one-letter code: Chaperone SurA (438 aa).

A signal peptide spans 1 to 28 (MKTMNPYIRHLILLICCLGGMLAQPLSA). PpiC domains are found at residues 181 to 282 (EEEY…KLVS) and 292 to 390 (VQQT…QVLE).

Its subcellular location is the periplasm. The catalysed reaction is [protein]-peptidylproline (omega=180) = [protein]-peptidylproline (omega=0). Its function is as follows. Chaperone involved in the correct folding and assembly of outer membrane proteins. Recognizes specific patterns of aromatic residues and the orientation of their side chains, which are found more frequently in integral outer membrane proteins. May act in both early periplasmic and late outer membrane-associated steps of protein maturation. This Dechloromonas aromatica (strain RCB) protein is Chaperone SurA.